The primary structure comprises 171 residues: tRNA-specific adenosine deaminase (171 aa).

Positions 6-133 constitute a CMP/dCMP-type deaminase domain; it reads EEQTYFMQEA…ERLNHRVQVE (128 aa). Residue histidine 57 coordinates Zn(2+). Glutamate 59 (proton donor) is an active-site residue. 2 residues coordinate Zn(2+): cysteine 87 and cysteine 90.

Belongs to the cytidine and deoxycytidylate deaminase family. As to quaternary structure, homodimer. Requires Zn(2+) as cofactor.

It catalyses the reaction adenosine(34) in tRNA + H2O + H(+) = inosine(34) in tRNA + NH4(+). Catalyzes the deamination of adenosine to inosine at the wobble position 34 of tRNA(Arg2). The polypeptide is tRNA-specific adenosine deaminase (Streptococcus pyogenes serotype M3 (strain ATCC BAA-595 / MGAS315)).